A 211-amino-acid chain; its full sequence is Ribosomal RNA small subunit methyltransferase G (211 aa).

S-adenosyl-L-methionine-binding positions include Gly-74, Leu-79, 125–126, and Arg-140; that span reads AE.

It belongs to the methyltransferase superfamily. RNA methyltransferase RsmG family.

It is found in the cytoplasm. Specifically methylates the N7 position of guanine in position 518 of 16S rRNA. This Clavibacter sepedonicus (Clavibacter michiganensis subsp. sepedonicus) protein is Ribosomal RNA small subunit methyltransferase G.